The chain runs to 656 residues: Spermatogenesis-associated protein 13 (656 aa).

The segment covering Met1 to Asp12 has biased composition (polar residues). The disordered stretch occupies residues Met1–Arg26. The residue at position 82 (Ser82) is a Phosphoserine. A disordered region spans residues Ile85 to Asp115. An ABR (APC-binding region) domain region spans residues Ser102 to Val154. At Ser118 the chain carries Phosphoserine. Residues Gly151 to Asn210 enclose the SH3 domain. Residues Pro215 to Gln242 form a disordered region. Residues Met244–Arg428 enclose the DH domain. Residues Glu459–Arg565 form the PH domain. Residues Arg565–Lys656 are C-terminal tail.

In terms of assembly, interacts (via ABR and SH3 domain) with APC. The binding of APC enhances its GEF activity by relieving it from an autoinhibitory conformation, in which the ABR and SH3 domains are associated with the C-terminal tail. Interacts (via C-terminal tail) with PPP1R9B (via C-terminus). Interacts with RAC1. In terms of tissue distribution, expression is aberrantly enhanced in most colorectal tumors.

It is found in the cytoplasm. It localises to the cell projection. The protein resides in the filopodium. Its subcellular location is the lamellipodium. The protein localises to the ruffle membrane. It is found in the podosome. Its activity is regulated as follows. Both the ABR and the SH3 domains contribute to maintaining the protein in an inhibited conformation by associating with the C-terminal tail. Binding of these domains to the C-terminal tail inhibits the activity of the protein by blocking a region that is required for its GEF activity. Functionally, acts as a guanine nucleotide exchange factor (GEF) for RHOA, RAC1 and CDC42 GTPases. Regulates cell migration and adhesion assembly and disassembly through a RAC1, PI3K, RHOA and AKT1-dependent mechanism. Increases both RAC1 and CDC42 activity, but decreases the amount of active RHOA. Required for MMP9 up-regulation via the JNK signaling pathway in colorectal tumor cells. Involved in tumor angiogenesis and may play a role in intestinal adenoma formation and tumor progression. This is Spermatogenesis-associated protein 13 (Spata13) from Mus musculus (Mouse).